The following is a 649-amino-acid chain: V-type ATP synthase subunit I (649 aa).

A run of 7 helical transmembrane segments spans residues 312-332 (FLSF…GLIF), 360-380 (FMIL…FFGV), 455-475 (DNIL…LGML), 485-505 (IGWV…LQAV), 520-540 (GQVG…GGII), 556-576 (VFSD…GAMV), and 593-613 (VLII…GGVI).

The protein belongs to the V-ATPase 116 kDa subunit family.

It localises to the cell membrane. Its function is as follows. Produces ATP from ADP in the presence of a proton gradient across the membrane. The protein is V-type ATP synthase subunit I (atpI) of Chlamydia muridarum (strain MoPn / Nigg).